A 503-amino-acid polypeptide reads, in one-letter code: Arabinose import ATP-binding protein AraG 1 (503 aa).

ABC transporter domains lie at 5–240 (LRFD…MVGR) and 251–497 (RALG…LPQT). Position 37–44 (37–44 (GENGAGKS)) interacts with ATP.

This sequence belongs to the ABC transporter superfamily. Arabinose importer (TC 3.A.1.2.2) family. In terms of assembly, the complex is composed of two ATP-binding proteins (AraG), two transmembrane proteins (AraH) and a solute-binding protein (AraF).

It is found in the cell inner membrane. The catalysed reaction is L-arabinose(out) + ATP + H2O = L-arabinose(in) + ADP + phosphate + H(+). Part of the ABC transporter complex AraFGH involved in arabinose import. Responsible for energy coupling to the transport system. This Burkholderia lata (strain ATCC 17760 / DSM 23089 / LMG 22485 / NCIMB 9086 / R18194 / 383) protein is Arabinose import ATP-binding protein AraG 1.